Consider the following 1364-residue polypeptide: Serine protease EatA (1364 aa).

The N-terminal stretch at 1 to 56 is a signal peptide; sequence MNKVFSLKYSFLAKGFIAVSELARRVSVKGKLKSASSIIISPITIAIVSYAPPSLA. The 251-residue stretch at 57–307 folds into the Peptidase S6 domain; it reads ATVNADISYQ…VVTTQDFLHQ (251 aa). Residues His134, Asp162, and Ser267 each act as charge relay system in the active site. Residues 1098-1364 form the Autotransporter domain; the sequence is DSQGDAGGWA…SINANFRYYF (267 aa).

In terms of processing, cleaved to release the mature protein from the outer membrane.

It localises to the periplasm. Its subcellular location is the secreted. The protein resides in the cell surface. The protein localises to the cell outer membrane. Inhibited by phenylmethylsulfonyl fluoride. Functionally, autotransporter serine protease probably involved in virulence. In Escherichia coli O78:H11 (strain H10407 / ETEC), this protein is Serine protease EatA (eatA).